A 602-amino-acid chain; its full sequence is Adenylosuccinate synthetase (602 aa).

GTP-binding positions include Gly-74–Lys-80 and Gly-104–Thr-106. Residue Asp-75 is the Proton acceptor of the active site. Positions 75 and 104 each coordinate Mg(2+). IMP contacts are provided by residues Asp-75 to Lys-78, Asn-102 to His-105, Thr-189, Lys-203, Gln-315, Thr-331, and Lys-459. The active-site Proton donor is the His-105. Ala-455–Arg-461 is a binding site for substrate. Residues Arg-461 and Gly-589–Gly-591 contribute to the GTP site.

It belongs to the adenylosuccinate synthetase family. Homodimer. Mg(2+) serves as cofactor.

The protein localises to the cytoplasm. The catalysed reaction is IMP + L-aspartate + GTP = N(6)-(1,2-dicarboxyethyl)-AMP + GDP + phosphate + 2 H(+). It functions in the pathway purine metabolism; AMP biosynthesis via de novo pathway; AMP from IMP: step 1/2. Its function is as follows. Plays an important role in the salvage pathway for purine nucleotide biosynthesis. Catalyzes the first committed step in the biosynthesis of AMP from IMP. In Trypanosoma brucei brucei (strain 927/4 GUTat10.1), this protein is Adenylosuccinate synthetase.